A 509-amino-acid chain; its full sequence is Histidine--tRNA ligase, cytoplasmic (509 aa).

A2 is subject to N-acetylalanine. Residues 3-59 (ERAALEELVKLQGERVRGLKQQKASAELIEEEVAKLLKLKAQLGPDESKQKFVLKTP) enclose the WHEP-TRS domain. S66 is modified (phosphoserine). L-histidine contacts are provided by residues 130–132 (DLT), R157, Q173, D177, R326, and 330–331 (YY). Residue S356 is modified to Phosphoserine.

Belongs to the class-II aminoacyl-tRNA synthetase family. In terms of assembly, homodimer.

The protein localises to the cytoplasm. It carries out the reaction tRNA(His) + L-histidine + ATP = L-histidyl-tRNA(His) + AMP + diphosphate + H(+). Catalyzes the ATP-dependent ligation of histidine to the 3'-end of its cognate tRNA, via the formation of an aminoacyl-adenylate intermediate (His-AMP). Plays a role in axon guidance. The sequence is that of Histidine--tRNA ligase, cytoplasmic (HARS1) from Pongo abelii (Sumatran orangutan).